Consider the following 1170-residue polypeptide: DNA-directed RNA polymerase subunit beta' (1170 aa).

4 residues coordinate Zn(2+): C60, C62, C75, and C78. Residues D449, D451, and D453 each coordinate Mg(2+). Zn(2+)-binding residues include C774, C848, C855, and C858. A disordered region spans residues 1145–1170 (EPGEENGEPGGERLYGMDELYGETAN).

This sequence belongs to the RNA polymerase beta' chain family. In terms of assembly, the RNAP catalytic core consists of 2 alpha, 1 beta, 1 beta' and 1 omega subunit. When a sigma factor is associated with the core the holoenzyme is formed, which can initiate transcription. Requires Mg(2+) as cofactor. The cofactor is Zn(2+).

The enzyme catalyses RNA(n) + a ribonucleoside 5'-triphosphate = RNA(n+1) + diphosphate. Its function is as follows. DNA-dependent RNA polymerase catalyzes the transcription of DNA into RNA using the four ribonucleoside triphosphates as substrates. This Pelotomaculum thermopropionicum (strain DSM 13744 / JCM 10971 / SI) protein is DNA-directed RNA polymerase subunit beta'.